The chain runs to 340 residues: Dihydroorotate dehydrogenase (quinone) (340 aa).

FMN is bound by residues 62 to 66 and threonine 86; that span reads AGMDK. Lysine 66 lines the substrate pocket. 111–115 serves as a coordination point for substrate; that stretch reads NRMGF. FMN-binding residues include asparagine 139 and asparagine 172. Asparagine 172 contacts substrate. The Nucleophile role is filled by serine 175. Position 177 (asparagine 177) interacts with substrate. FMN contacts are provided by lysine 217 and threonine 245. 246–247 lines the substrate pocket; that stretch reads NT. Residues glycine 268, glycine 297, and 318 to 319 each bind FMN; that span reads YS.

Belongs to the dihydroorotate dehydrogenase family. Type 2 subfamily. In terms of assembly, monomer. FMN serves as cofactor.

The protein resides in the cell membrane. It catalyses the reaction (S)-dihydroorotate + a quinone = orotate + a quinol. It functions in the pathway pyrimidine metabolism; UMP biosynthesis via de novo pathway; orotate from (S)-dihydroorotate (quinone route): step 1/1. In terms of biological role, catalyzes the conversion of dihydroorotate to orotate with quinone as electron acceptor. The protein is Dihydroorotate dehydrogenase (quinone) of Shewanella woodyi (strain ATCC 51908 / MS32).